The primary structure comprises 564 residues: Solute carrier family 22 member 21 (564 aa).

Topologically, residues 1-20 (MLDYDEVTAFLGEWGTFQRL) are cytoplasmic. The chain crosses the membrane as a helical span at residues 21-41 (IFFLLSASIIPNGFTGLSAVF). Over 42–142 (LTAIPEHRCR…DLVCKDDWKA (101 aa)) the chain is Extracellular. N-linked (GlcNAc...) asparagine glycosylation is found at N57, N64, and N91. The chain crosses the membrane as a helical span at residues 143–163 (PLTTSFFYVGVLLGSFISGQL). The Cytoplasmic portion of the chain corresponds to 164 to 172 (SDRFGRKNI). A helical transmembrane segment spans residues 173–193 (LFLTMAMHTGFSFIQVFSVNF). The Extracellular segment spans residues 194-197 (EMFT). Residues 198–218 (LLYTLVGMGHISNYVAAFVLG) form a helical membrane-spanning segment. Residue 218-225 (GTEMLSKS) participates in ATP binding. Residues 219–232 (TEMLSKSVRIIFAT) lie on the Cytoplasmic side of the membrane. A helical transmembrane segment spans residues 233–253 (LGVCIFFAFGFMVLPLFAYFI). At 254–257 (REWR) the chain is on the extracellular side. A helical membrane pass occupies residues 258-278 (RLLLAITLPGVLCGALWWFIP). At 279–344 (ESPRWLISQG…YDLVRTPNIR (66 aa)) the chain is on the cytoplasmic side. The helical transmembrane segment at 345-365 (ILTIMSIILWLTISVGYFGLS) threads the bilayer. The Extracellular portion of the chain corresponds to 366–376 (LDTPNLNGNIY). The chain crosses the membrane as a helical span at residues 377–397 (VNCFLLAAVEVPAYVLAWLLL). Over 398–409 (QHVSRRYSMAGS) the chain is Cytoplasmic. A helical membrane pass occupies residues 410–430 (LFLGGSVLLLVQLVPSDLHYL). The Extracellular portion of the chain corresponds to 431–433 (STT). A helical membrane pass occupies residues 434–454 (LVMVGKFGITSAYSMVYVYTA). Topologically, residues 455–465 (ELYPTVVRNMG) are cytoplasmic. A helical membrane pass occupies residues 466–486 (VGVSSTASRLGSILSPYFVYL). Over 487–491 (GAYDR) the chain is Extracellular. The chain crosses the membrane as a helical span at residues 492–512 (RLPYILMGSLTILTAIITLFF). Residues 513–564 (PESSGVSLPETIDEMQKVKKLKQRQSLSKKGSPKESKGNVSRTSRTSEPKGF) lie on the Cytoplasmic side of the membrane. The tract at residues 532–564 (KLKQRQSLSKKGSPKESKGNVSRTSRTSEPKGF) is disordered.

Belongs to the major facilitator (TC 2.A.1) superfamily. Organic cation transporter (TC 2.A.1.19) family. In terms of tissue distribution, predominantly expressed in testis.

The protein localises to the peroxisome membrane. In terms of biological role, sodium-ion independent, medium affinity carnitine transporter. Also transports organic cations such as tetraethylammonium (TEA) without the involvement of sodium. Relative uptake activity ratio of carnitine to TEA is 746. The polypeptide is Solute carrier family 22 member 21 (Slc22a21) (Mus musculus (Mouse)).